A 409-amino-acid chain; its full sequence is Serine/threonine transporter SstT (409 aa).

9 helical membrane-spanning segments follow: residues G14–A34, G57–I77, I89–F109, A149–L169, I190–V210, L224–V244, I296–L316, I338–I358, and F365–V385.

It belongs to the dicarboxylate/amino acid:cation symporter (DAACS) (TC 2.A.23) family.

It is found in the cell inner membrane. It catalyses the reaction L-serine(in) + Na(+)(in) = L-serine(out) + Na(+)(out). It carries out the reaction L-threonine(in) + Na(+)(in) = L-threonine(out) + Na(+)(out). In terms of biological role, involved in the import of serine and threonine into the cell, with the concomitant import of sodium (symport system). The polypeptide is Serine/threonine transporter SstT (Campylobacter fetus subsp. fetus (strain 82-40)).